A 439-amino-acid polypeptide reads, in one-letter code: MAEDVSSAAPSPRGCADGRDADPTEEQMAETERNDEEQFECQELLECQVQVGAPEEEEEEEEDAGLVAEAEAVAAGWMLDFLCLSLCRAFRDGRSEDFRRTRNSAEAIIHGLSSLTACQLRTIYICQFLTRIAAGKTLDAQFENDERITPLESALMIWGSIEKEHDKLHEEIQNLIKIQAIAVCMENGNFKEAEEVFERIFGDPNSHMPFKSKLLMIISQKDTFHSFFQHFSYNHMMEKIKSYVNYVLSEKSSTFLMKAAAKVVESKRTRTITSQDKPSGNDVEMETEANLDTRKSVSDKQSAVTESSEGTVSLLRSHKNLFLSKLQHGTQQQDLNKKERRVGTPQSTKKKKESRRATESRIPVSKSQPVTPEKHRARKRQAWLWEEDKNLRSGVRKYGEGNWSKILLHYKFNNRTSVMLKDRWRTMKKLKLISSDSED.

Positions M1 to E36 are disordered. An N-acetylalanine modification is found at A2. S11 is modified (phosphoserine). Over residues P23–E36 the composition is skewed to acidic residues. The interval E58–R268 is TRFH mediates dimerization. K213 participates in a covalent cross-link: Glycyl lysine isopeptide (Lys-Gly) (interchain with G-Cter in SUMO2). S219 is modified (phosphoserine; by ATM). The segment at E265 to R378 is interaction with RLIM. The interval S266–T311 is disordered. Residues D299–T311 are compositionally biased toward polar residues. K325 participates in a covalent cross-link: Glycyl lysine isopeptide (Lys-Gly) (interchain with G-Cter in SUMO2). The interval L326–H375 is disordered. Residues K337–R356 carry the Nuclear localization signal motif. K366 participates in a covalent cross-link: Glycyl lysine isopeptide (Lys-Gly) (interchain with G-Cter in SUMO2). One can recognise an HTH myb-type domain in the interval H375 to L432. The segment at residues W403–K428 is a DNA-binding region (H-T-H motif).

In terms of assembly, homodimer; can contain both isoforms. Found in a complex with POT1; TINF2 and TNKS1. Interacts with ATM, TINF2, TNKS1, TNKS2, PINX1, NEK2 and MAPRE1. Component of the shelterin complex (telosome) composed of TERF1, TERF2, TINF2, TERF2IP ACD and POT1. Interacts with RLIM (via N-terminus). Interacts with FBXO4. Interaction with TINF2 protects against interaction with FBXO4 and subsequent polyubiquitination and proteasomal degradation. Interacts with GNL3L; this interaction promotes homodimerization. Interacts with TIN2. Interacts with RTEL1. Interactions with GNL3L and TIN2 are mutually exclusive. Interacts with CCDC79/TERB1. Interacts with TRIOBP isoform 1; mediates TERF1 localization to the centrosome. In terms of processing, phosphorylated preferentially on Ser-219 in an ATM-dependent manner in response to ionizing DNA damage. ADP-ribosylation by TNKS1 or TNKS2 diminishes its ability to bind to telomeric DNA. Post-translationally, ubiquitinated by RLIM/RNF12, leading to its degradation by the proteasome. Ubiquitinated by a SCF (SKP1-CUL1-F-box protein) ubiquitin-protein ligase complex, leading to its degradation by the proteasome. Highly expressed and ubiquitous. Isoform Pin2 predominates.

The protein localises to the nucleus. It localises to the cytoplasm. It is found in the cytoskeleton. The protein resides in the spindle. Its subcellular location is the chromosome. The protein localises to the telomere. Its function is as follows. Binds the telomeric double-stranded 5'-TTAGGG-3' repeat and negatively regulates telomere length. Involved in the regulation of the mitotic spindle. Component of the shelterin complex (telosome) that is involved in the regulation of telomere length and protection. Shelterin associates with arrays of double-stranded 5'-TTAGGG-3' repeats added by telomerase and protects chromosome ends; without its protective activity, telomeres are no longer hidden from the DNA damage surveillance and chromosome ends are inappropriately processed by DNA repair pathways. This chain is Telomeric repeat-binding factor 1 (TERF1), found in Homo sapiens (Human).